Here is a 217-residue protein sequence, read N- to C-terminus: Peroxiredoxin (217 aa).

The Thioredoxin domain maps to 2-159 (VVIGEKFPEV…IVRLVKALQT (158 aa)). Residue cysteine 46 is the Cysteine sulfenic acid (-SOH) intermediate of the active site. A substrate-binding site is contributed by arginine 122.

This sequence belongs to the peroxiredoxin family. Prx6 subfamily. Homodecamer. Pentamer of dimers that assemble into a ring structure.

Its subcellular location is the cytoplasm. It catalyses the reaction a hydroperoxide + [thioredoxin]-dithiol = an alcohol + [thioredoxin]-disulfide + H2O. Its function is as follows. Thiol-specific peroxidase that catalyzes the reduction of hydrogen peroxide and organic hydroperoxides to water and alcohols, respectively. Plays a role in cell protection against oxidative stress by detoxifying peroxides. The polypeptide is Peroxiredoxin (Methanococcus maripaludis (strain DSM 14266 / JCM 13030 / NBRC 101832 / S2 / LL)).